A 412-amino-acid chain; its full sequence is L-cysteine:1D-myo-inositol 2-amino-2-deoxy-alpha-D-glucopyranoside ligase (412 aa).

The disordered stretch occupies residues 1 to 30 (MQTWSSPSVPKLRGAPRPLRLHDTATGEVR). A Zn(2+)-binding site is contributed by cysteine 43. Residues 43 to 46 (CGIT), threonine 58, and 81 to 83 (NVT) contribute to the L-cysteinyl-5'-AMP site. Residues 45 to 55 (ITPYDATHLGH) carry the 'HIGH' region motif. A 'ERGGDP' region motif is present at residues 187–192 (ERGGDP). An L-cysteinyl-5'-AMP-binding site is contributed by tryptophan 227. Residue cysteine 231 participates in Zn(2+) binding. 249–251 (GSD) contributes to the L-cysteinyl-5'-AMP binding site. Histidine 256 provides a ligand contact to Zn(2+). Isoleucine 283 provides a ligand contact to L-cysteinyl-5'-AMP. The 'KMSKS' region signature appears at 289–293 (KMSKS).

It belongs to the class-I aminoacyl-tRNA synthetase family. MshC subfamily. In terms of assembly, monomer. The cofactor is Zn(2+).

It catalyses the reaction 1D-myo-inositol 2-amino-2-deoxy-alpha-D-glucopyranoside + L-cysteine + ATP = 1D-myo-inositol 2-(L-cysteinylamino)-2-deoxy-alpha-D-glucopyranoside + AMP + diphosphate + H(+). Catalyzes the ATP-dependent condensation of GlcN-Ins and L-cysteine to form L-Cys-GlcN-Ins. This Actinosynnema mirum (strain ATCC 29888 / DSM 43827 / JCM 3225 / NBRC 14064 / NCIMB 13271 / NRRL B-12336 / IMRU 3971 / 101) protein is L-cysteine:1D-myo-inositol 2-amino-2-deoxy-alpha-D-glucopyranoside ligase.